The chain runs to 526 residues: Cytochrome P450 monooxygeanse terK (526 aa).

A helical transmembrane segment spans residues 21–43 (NWGQLTGALLFLAACTWIYLPAF). Cysteine 465 provides a ligand contact to heme.

The protein belongs to the cytochrome P450 family. Heme serves as cofactor.

It is found in the membrane. Its pathway is secondary metabolite biosynthesis. Functionally, cytochrome P450 monooxygeanse; part of the gene cluster that mediates the biosynthesis of terpendoles, indole-diterpene (IDT) mycotoxins including terpendole I, terpendole K, terpendole C, as well as the kinesin Eg5 inhibitor terpendole E. Terpendoles biosynthesis begins with the synthesis of geranylgeranyl diphosphate (GGPP) by a yet unidentified GGPP synthase. Condensation of indole-3-glycerol phosphate with GGPP by the prenyltransferase terC then forms 3-geranylgeranylindole (3-GGI), followed by epoxidation and cyclization of this intermediate (by the FAD-dependent monooxygeanse terM and the terpene cyclase terB) to form paspaline. The cytochrome monooxygenase terQ then hydroxylates paspalline at C-11 to yield terpendole E. The cytochrome monooxygenase terP converts terpendole E to 13-desoxyterpendole I, and terQ converts 13-desoxyterpendole I into terpendole I. TerF and terK are required for conversion of terpendole I to terpendole C which is further converted to terpendole K. In Tolypocladium album (Soil fungus), this protein is Cytochrome P450 monooxygeanse terK.